Consider the following 147-residue polypeptide: Transcription antitermination protein NusB (147 aa).

Belongs to the NusB family.

Functionally, involved in transcription antitermination. Required for transcription of ribosomal RNA (rRNA) genes. Binds specifically to the boxA antiterminator sequence of the ribosomal RNA (rrn) operons. This chain is Transcription antitermination protein NusB, found in Teredinibacter turnerae (strain ATCC 39867 / T7901).